A 139-amino-acid chain; its full sequence is Large ribosomal subunit protein uL16 (139 aa).

A compositionally biased stretch (basic residues) spans 1-19 (MLIPRRVKHRKQHHPKRSG). Residues 1–25 (MLIPRRVKHRKQHHPKRSGMSKGGT) are disordered.

This sequence belongs to the universal ribosomal protein uL16 family. Part of the 50S ribosomal subunit.

In terms of biological role, binds 23S rRNA and is also seen to make contacts with the A and possibly P site tRNAs. This is Large ribosomal subunit protein uL16 from Streptomyces griseus subsp. griseus (strain JCM 4626 / CBS 651.72 / NBRC 13350 / KCC S-0626 / ISP 5235).